Here is a 284-residue protein sequence, read N- to C-terminus: MSAAISRNWPAPAKLNLFLHINGRRTDGYHELQTLFQFIDYCDMLDFKVTDSSELILHSNMAGVVADSDNLILRAAKSLQQMTSFKGGAEIWLDKRLPMGGGLGGGSSDAATTLVALNTLWNTQLSTAELAKIGLKLGADIPVFIHGFAAFAEGIGERLQVVSPPEPWYLVIAPDAHVSTAEVFQDPLLPRNTPKLAIDTLMSQAWINDCQKLVVSKYPQVAKALGWLLEYAPSRMTGTGACVFGEFTQQQQALAALAKLPSDMQGFVAKGMNISPLITRLNHP.

The active site involves Lys14. Pro98–Ser108 is a binding site for ATP. Residue Asp140 is part of the active site.

It belongs to the GHMP kinase family. IspE subfamily.

The catalysed reaction is 4-CDP-2-C-methyl-D-erythritol + ATP = 4-CDP-2-C-methyl-D-erythritol 2-phosphate + ADP + H(+). It functions in the pathway isoprenoid biosynthesis; isopentenyl diphosphate biosynthesis via DXP pathway; isopentenyl diphosphate from 1-deoxy-D-xylulose 5-phosphate: step 3/6. Its function is as follows. Catalyzes the phosphorylation of the position 2 hydroxy group of 4-diphosphocytidyl-2C-methyl-D-erythritol. This chain is 4-diphosphocytidyl-2-C-methyl-D-erythritol kinase, found in Shewanella putrefaciens (strain CN-32 / ATCC BAA-453).